The following is a 123-amino-acid chain: U11/U12 small nuclear ribonucleoprotein 25 kDa protein (123 aa).

Residues 32–123 (MTVRVCKMDG…VSFIKKLRQK (92 aa)) form the Ubiquitin-like domain.

Component of the U11/U12 snRNPs that are part of the U12-type spliceosome.

It is found in the nucleus. The chain is U11/U12 small nuclear ribonucleoprotein 25 kDa protein (SNRNP25) from Bos taurus (Bovine).